The following is a 110-amino-acid chain: MEAIAKHRFARISPQKARLVADQLRGKPVAQALEILNFSNKKAAELIKKVLESAIANAEHNEGADIDDLNVAKIFVDEGPTMKRIMPRAKGRADRILKRSSHITVVVADR.

It belongs to the universal ribosomal protein uL22 family. In terms of assembly, part of the 50S ribosomal subunit.

In terms of biological role, this protein binds specifically to 23S rRNA; its binding is stimulated by other ribosomal proteins, e.g. L4, L17, and L20. It is important during the early stages of 50S assembly. It makes multiple contacts with different domains of the 23S rRNA in the assembled 50S subunit and ribosome. Its function is as follows. The globular domain of the protein is located near the polypeptide exit tunnel on the outside of the subunit, while an extended beta-hairpin is found that lines the wall of the exit tunnel in the center of the 70S ribosome. The polypeptide is Large ribosomal subunit protein uL22 (Photobacterium profundum (strain SS9)).